The primary structure comprises 358 residues: Probable D-xylulose reductase A (358 aa).

Zn(2+)-binding residues include cysteine 47, histidine 72, and glutamate 73. 182–187 (GAGPVG) is a binding site for NAD(+).

This sequence belongs to the zinc-containing alcohol dehydrogenase family. Requires Zn(2+) as cofactor.

It carries out the reaction xylitol + NAD(+) = D-xylulose + NADH + H(+). It functions in the pathway carbohydrate degradation; L-arabinose degradation via L-arabinitol; D-xylulose 5-phosphate from L-arabinose (fungal route): step 4/5. Functionally, xylitol dehydrogenase which catalyzes the conversion of xylitol to D-xylulose. Xylose is a major component of hemicelluloses such as xylan. Most fungi utilize D-xylose via three enzymatic reactions, xylose reductase (XR), xylitol dehydrogenase (XDH), and xylulokinase, to form xylulose 5-phosphate, which enters pentose phosphate pathway. This Aspergillus fumigatus (strain CBS 144.89 / FGSC A1163 / CEA10) (Neosartorya fumigata) protein is Probable D-xylulose reductase A (xdhA).